The primary structure comprises 206 residues: Guanylate kinase (206 aa).

Residues 7 to 185 enclose the Guanylate kinase-like domain; sequence GIVLVLCAPS…AYDELRAAYL (179 aa). 14–21 is a binding site for ATP; that stretch reads APSGTGKT.

It belongs to the guanylate kinase family.

It localises to the cytoplasm. It carries out the reaction GMP + ATP = GDP + ADP. Its function is as follows. Essential for recycling GMP and indirectly, cGMP. The chain is Guanylate kinase from Oleidesulfovibrio alaskensis (strain ATCC BAA-1058 / DSM 17464 / G20) (Desulfovibrio alaskensis).